The chain runs to 110 residues: uncharacterized protein (110 aa).

3 helical membrane passes run 32 to 52 (VLNVVSIAILFETPHRLALVP), 57 to 77 (YTHMAIPLSTCLFCLCLCICI), and 90 to 110 (FLASFFVLILTINDLDVTFVI).

Its subcellular location is the membrane. May play a role in proper chromosome segregation. Suppresses the high-frequency loss of mini-chromosomes when overexpressed, and this suppression is completely dependent on silencing protein SIR4. This is an uncharacterized protein from Saccharomyces cerevisiae (strain ATCC 204508 / S288c) (Baker's yeast).